The primary structure comprises 165 residues: Cytochrome c-type biogenesis protein CcmE (165 aa).

Residues 1–29 (MSATAEQNARNPKGKGGFARTVSQRKRKR) are Cytoplasmic-facing. Residues 30 to 50 (LFLIGGALAVLAVAVGLMLTA) form a helical; Signal-anchor for type II membrane protein membrane-spanning segment. The Periplasmic segment spans residues 51 to 165 (FNQDIRFFRT…LKKKGVWEGK (115 aa)). 2 residues coordinate heme: His143 and Tyr147.

Belongs to the CcmE/CycJ family.

It is found in the cell inner membrane. Heme chaperone required for the biogenesis of c-type cytochromes. Transiently binds heme delivered by CcmC and transfers the heme to apo-cytochromes in a process facilitated by CcmF and CcmH. This Brucella abortus (strain S19) protein is Cytochrome c-type biogenesis protein CcmE.